A 343-amino-acid chain; its full sequence is Holliday junction branch migration complex subunit RuvB (343 aa).

The segment at 1-181 (MDRIIDSAAT…FGIVQRLEFY (181 aa)) is large ATPase domain (RuvB-L). ATP is bound by residues Ile-20, Arg-21, Gly-62, Lys-65, Thr-66, Thr-67, 128–130 (EDF), Arg-171, Tyr-181, and Arg-218. Residue Thr-66 participates in Mg(2+) binding. A small ATPAse domain (RuvB-S) region spans residues 182–252 (SPEDLARIVR…VAQAAMQMLK (71 aa)). The interval 255-343 (QGGFDELDRR…SAFTDPEDLF (89 aa)) is head domain (RuvB-H). Positions 291, 310, and 315 each coordinate DNA.

It belongs to the RuvB family. As to quaternary structure, homohexamer. Forms an RuvA(8)-RuvB(12)-Holliday junction (HJ) complex. HJ DNA is sandwiched between 2 RuvA tetramers; dsDNA enters through RuvA and exits via RuvB. An RuvB hexamer assembles on each DNA strand where it exits the tetramer. Each RuvB hexamer is contacted by two RuvA subunits (via domain III) on 2 adjacent RuvB subunits; this complex drives branch migration. In the full resolvosome a probable DNA-RuvA(4)-RuvB(12)-RuvC(2) complex forms which resolves the HJ.

Its subcellular location is the cytoplasm. The catalysed reaction is ATP + H2O = ADP + phosphate + H(+). The RuvA-RuvB-RuvC complex processes Holliday junction (HJ) DNA during genetic recombination and DNA repair, while the RuvA-RuvB complex plays an important role in the rescue of blocked DNA replication forks via replication fork reversal (RFR). RuvA specifically binds to HJ cruciform DNA, conferring on it an open structure. The RuvB hexamer acts as an ATP-dependent pump, pulling dsDNA into and through the RuvAB complex. RuvB forms 2 homohexamers on either side of HJ DNA bound by 1 or 2 RuvA tetramers; 4 subunits per hexamer contact DNA at a time. Coordinated motions by a converter formed by DNA-disengaged RuvB subunits stimulates ATP hydrolysis and nucleotide exchange. Immobilization of the converter enables RuvB to convert the ATP-contained energy into a lever motion, pulling 2 nucleotides of DNA out of the RuvA tetramer per ATP hydrolyzed, thus driving DNA branch migration. The RuvB motors rotate together with the DNA substrate, which together with the progressing nucleotide cycle form the mechanistic basis for DNA recombination by continuous HJ branch migration. Branch migration allows RuvC to scan DNA until it finds its consensus sequence, where it cleaves and resolves cruciform DNA. In Xylella fastidiosa (strain Temecula1 / ATCC 700964), this protein is Holliday junction branch migration complex subunit RuvB.